The sequence spans 577 residues: Proline--tRNA ligase (577 aa).

This sequence belongs to the class-II aminoacyl-tRNA synthetase family. ProS type 1 subfamily. As to quaternary structure, homodimer.

The protein localises to the cytoplasm. It catalyses the reaction tRNA(Pro) + L-proline + ATP = L-prolyl-tRNA(Pro) + AMP + diphosphate. In terms of biological role, catalyzes the attachment of proline to tRNA(Pro) in a two-step reaction: proline is first activated by ATP to form Pro-AMP and then transferred to the acceptor end of tRNA(Pro). As ProRS can inadvertently accommodate and process non-cognate amino acids such as alanine and cysteine, to avoid such errors it has two additional distinct editing activities against alanine. One activity is designated as 'pretransfer' editing and involves the tRNA(Pro)-independent hydrolysis of activated Ala-AMP. The other activity is designated 'posttransfer' editing and involves deacylation of mischarged Ala-tRNA(Pro). The misacylated Cys-tRNA(Pro) is not edited by ProRS. The polypeptide is Proline--tRNA ligase (Thermotoga maritima (strain ATCC 43589 / DSM 3109 / JCM 10099 / NBRC 100826 / MSB8)).